Reading from the N-terminus, the 516-residue chain is Anaerobic nitric oxide reductase transcription regulator NorR (516 aa).

4-aspartylphosphate is present on Asp-57. The Sigma-54 factor interaction domain occupies 187–416 (IIGLSAPMLQ…LEHAIHRAVV (230 aa)). ATP-binding positions include 215–222 (GETGTGKE) and 278–287 (ADNGTLFLDE). A DNA-binding region (H-T-H motif) is located at residues 482 to 501 (WAATARALELDVANLHRLAK).

Its pathway is nitrogen metabolism; nitric oxide reduction. Its function is as follows. Required for the expression of anaerobic nitric oxide (NO) reductase, acts as a transcriptional activator for at least the norVW operon. Activation also requires sigma-54. The sequence is that of Anaerobic nitric oxide reductase transcription regulator NorR from Klebsiella pneumoniae (strain 342).